A 506-amino-acid chain; its full sequence is Spindle pole body protein CSA6 (506 aa).

Disordered regions lie at residues 18-121 (SPIK…PNEN), 252-276 (EKHNNPQDSPPKVKIATPDPEVETQ), 329-429 (PSSP…YSIR), and 447-470 (KNDQKDTNSPEESNTDGKEEEEKV). A compositionally biased stretch (basic and acidic residues) spans 38-48 (IDLRDYMDRQK). Residues 50-59 (SRNYSDSEYT) are compositionally biased toward polar residues. A compositionally biased stretch (basic and acidic residues) spans 63–72 (IKREKPETKQ). Positions 94–119 (PTKNYSQHVMQERSAPNSPQKKSLPN) are enriched in polar residues. Composition is skewed to polar residues over residues 330 to 353 (SSPNHQTQPVFQSTPQSKVESVNL) and 361 to 389 (QPSHVSSNSQQNLSDKSRTSIPSRDNPSP). 2 stretches are compositionally biased toward basic and acidic residues: residues 412 to 422 (EWTREREERDG) and 461 to 470 (TDGKEEEEKV).

It localises to the cytoplasm. The protein resides in the cytoskeleton. Its subcellular location is the microtubule organizing center. It is found in the spindle pole body. Plays a role in mitotic spindle pole body organization, possibly at the point of spindle pole body separation. Required for mitotic exit. The chain is Spindle pole body protein CSA6 from Candida tropicalis (strain ATCC MYA-3404 / T1) (Yeast).